Consider the following 791-residue polypeptide: AP-1 complex subunit gamma-like 2 (791 aa).

Residues 671-786 form the GAE domain; that stretch reads APIPSVRVFE…QEIFEVDNLP (116 aa).

Belongs to the adaptor complexes large subunit family. As to quaternary structure, may interact with AP1S1/Sigma1A-adaptin and AP1S2/Sigma1B-adaptin. Probably does not interact with APB1. Interacts (via GAE domain) with RABEP1, NECAP1, CLINT1 and AFTPH/aftiphilin. Interacts with HBV major surface antigen L. Interacts with HBV core protein C in a ubiquitin-dependent manner. Binds ubiquitin. As to expression, widely expressed.

The protein resides in the golgi apparatus membrane. It is found in the cytoplasmic vesicle membrane. It localises to the endosome membrane. May function in protein sorting in late endosomes or multivesucular bodies (MVBs). Involved in MVB-assisted maturation of hepatitis B virus (HBV). This is AP-1 complex subunit gamma-like 2 (Ap1g2) from Mus musculus (Mouse).